The following is an 818-amino-acid chain: Dipeptidyl aminopeptidase B (818 aa).

At Met1–Arg29 the chain is on the cytoplasmic side. A helical; Signal-anchor for type II membrane protein membrane pass occupies residues Val30–Leu45. At Lys46 to Lys818 the chain is on the lumenal side. N-linked (GlcNAc...) asparagine glycans are attached at residues Asn63, Asn79, Asn110, Asn139, Asn372, Asn392, and Asn421. Ser679 (charge relay system) is an active-site residue. Asn738 is a glycosylation site (N-linked (GlcNAc...) asparagine). Residues Asp756 and His789 each act as charge relay system in the active site.

It belongs to the peptidase S9B family.

It is found in the vacuole membrane. The sequence is that of Dipeptidyl aminopeptidase B (DAP2) from Saccharomyces cerevisiae (strain ATCC 204508 / S288c) (Baker's yeast).